The chain runs to 628 residues: tRNA uridine 5-carboxymethylaminomethyl modification enzyme MnmG 1 (628 aa).

11–16 (GAGHAG) provides a ligand contact to FAD. Residue 280-294 (GPRHCPSIDRKVLNF) coordinates NAD(+).

It belongs to the MnmG family. Homodimer. Heterotetramer of two MnmE and two MnmG subunits. Requires FAD as cofactor.

The protein resides in the cytoplasm. Its function is as follows. NAD-binding protein involved in the addition of a carboxymethylaminomethyl (cmnm) group at the wobble position (U34) of certain tRNAs, forming tRNA-cmnm(5)s(2)U34. The protein is tRNA uridine 5-carboxymethylaminomethyl modification enzyme MnmG 1 of Fusobacterium nucleatum subsp. nucleatum (strain ATCC 25586 / DSM 15643 / BCRC 10681 / CIP 101130 / JCM 8532 / KCTC 2640 / LMG 13131 / VPI 4355).